The chain runs to 61 residues: Phospholipase A2 (61 aa).

Ca(2+) contacts are provided by Tyr27, Gly29, and Gly31. Cysteines 28 and 35 form a disulfide. His38 is a catalytic residue. Ca(2+) is bound at residue Asp39. A disulfide bridge connects residues Cys41 and Cys59. The active site involves Asp60.

This sequence belongs to the phospholipase A2 family. Group II subfamily. D49 sub-subfamily. Homodimer. Ca(2+) serves as cofactor. Expressed by the venom gland.

Its subcellular location is the secreted. The catalysed reaction is a 1,2-diacyl-sn-glycero-3-phosphocholine + H2O = a 1-acyl-sn-glycero-3-phosphocholine + a fatty acid + H(+). Functionally, snake venom phospholipase A2 (PLA2) that displays edema-inducing activities. PLA2 catalyzes the calcium-dependent hydrolysis of the 2-acyl groups in 3-sn-phosphoglycerides. The chain is Phospholipase A2 from Crotalus atrox (Western diamondback rattlesnake).